The chain runs to 624 residues: MASTRRPFGPPHGAFDFRDMFFDSSKMEEIRNVQARSLGQMAPGQSRILKRNQTMDEKYLLPKEEALAGTGVRLSLRPPTISSKSRASEALRKLAQIETKILKRRQVPTAWSGMESDSTASERSLPQRTDTTSVSSQYPLRTFQKQVCKTSVVGDDGQSGKGSRFLKKKELPAEARSPVLAAETEKQVLLPTQREPARKYDAPDSDEEEMKVLLGSLMESSGEKERNGNQELPGTRSDLGKVFLDLTPDQPGVLCLLSADQSSLKSTSVSLRAQSLQTRSGGDPASLTTSPSILRDDFSRSASSKRECIKLASSPSRMETESSEEPVSEAAADSLHDFRINILSIDDLVLADGYKSDGEQKGVTTVVEDEEDLTTEHEISEHPGASSTAAVWSHSMSSARSMETPTALSVSPVYSEDFEQFSGPLALEESLDRTLDTLSKFSSGEQTDTVSRQPLSRTEWGRGVTRVVKETAVQTLDPAFAYQWTKAGGMAAIGPTLGGGYVDPVPIASHIISADAIEALTAYSPAVLALNDMLKQQLSLTQQFIEASHHLHHSLLRSLDEDSFHYHTLEEAKEYIRCHRPAPLTMEAALQEVRKELEVHLDINDSHVEASKAAALPAEPIDGL.

Positions 108–138 (PTAWSGMESDSTASERSLPQRTDTTSVSSQY) are disordered. Phosphoserine is present on Ser112. Residues 115-138 (ESDSTASERSLPQRTDTTSVSSQY) show a composition bias toward polar residues. A Phosphoserine modification is found at Ser205. Disordered stretches follow at residues 217 to 236 (LMES…PGTR) and 305 to 329 (KREC…PVSE).

This is an uncharacterized protein from Rattus norvegicus (Rat).